The sequence spans 284 residues: NAD kinase (284 aa).

The Proton acceptor role is filled by Asp-60. NAD(+)-binding positions include Asp-60–Gly-61, Asn-134–Asp-135, Arg-145, Lys-162, Asp-164, Thr-175–Ser-180, and Gln-234.

The protein belongs to the NAD kinase family. It depends on a divalent metal cation as a cofactor.

The protein resides in the cytoplasm. The enzyme catalyses NAD(+) + ATP = ADP + NADP(+) + H(+). In terms of biological role, involved in the regulation of the intracellular balance of NAD and NADP, and is a key enzyme in the biosynthesis of NADP. Catalyzes specifically the phosphorylation on 2'-hydroxyl of the adenosine moiety of NAD to yield NADP. This is NAD kinase from Clostridium beijerinckii (strain ATCC 51743 / NCIMB 8052) (Clostridium acetobutylicum).